Reading from the N-terminus, the 568-residue chain is Periplasmic trehalase (568 aa).

Residues 1 to 38 form the signal peptide; it reads MPHAPARSGDAMSAAAPPCCTSLLGLSLSMFVAPCALA. Substrate is bound by residues Arg-169, 176-177, Asn-213, 222-224, 294-296, and Gly-327; these read WD, RSQ, and RPE. Active-site proton donor/acceptor residues include Asp-329 and Glu-511. Residue Glu-526 participates in substrate binding.

This sequence belongs to the glycosyl hydrolase 37 family.

It is found in the periplasm. The catalysed reaction is alpha,alpha-trehalose + H2O = alpha-D-glucose + beta-D-glucose. Provides the cells with the ability to utilize trehalose at high osmolarity by splitting it into glucose molecules that can subsequently be taken up by the phosphotransferase-mediated uptake system. This chain is Periplasmic trehalase, found in Xanthomonas campestris pv. campestris (strain B100).